The following is a 305-amino-acid chain: NAD kinase (305 aa).

The active-site Proton acceptor is Asp-76. NAD(+) contacts are provided by residues 76 to 77 (DG), 150 to 151 (ND), Arg-161, and Asp-180.

This sequence belongs to the NAD kinase family. Requires a divalent metal cation as cofactor.

It is found in the cytoplasm. The enzyme catalyses NAD(+) + ATP = ADP + NADP(+) + H(+). In terms of biological role, involved in the regulation of the intracellular balance of NAD and NADP, and is a key enzyme in the biosynthesis of NADP. Catalyzes specifically the phosphorylation on 2'-hydroxyl of the adenosine moiety of NAD to yield NADP. This chain is NAD kinase, found in Treponema pallidum (strain Nichols).